Here is a 399-residue protein sequence, read N- to C-terminus: MSGAEEAGGGGPAAGPAGAVPAGVGVGAGPGAAAGPAAAALGEAAGPGIPDEAALAGARQLQEAAGDPDAPPKKRLRAAEAAEAAAAAVAAGSGKLEERLYSVLCCTVCLDLPKASVYQCTNGHLMCAGCFIHLLADARLKEEQATCPNCRCEISKSLCCRNLAVEKAVSELPSECGFCLRQFPRSLLERHQKEECQDRVTQCKYKRIGCPWHGPFHELTVHEAACAHPTKTGNELMEILDEMDQSHRKEMQLYNSIFSLLSFEKIGYTEVQFRPYRTDDFITRLYYETPRFTVLNQTWVLKARVNDSERNPNLSCKRTLSFQLLLKSKVTAPLECSFLLLKGPYDDVRISPVIYHFVFTNESNETDYVPLPIIDSVECNKLLAAKNINLRLFLFQIQK.

Gly residues predominate over residues 1-13 (MSGAEEAGGGGPA). The tract at residues 1 to 21 (MSGAEEAGGGGPAAGPAGAVP) is disordered. An RING-type; degenerate zinc finger spans residues 106-151 (CTVCLDLPKASVYQCTNGHLMCAGCFIHLLADARLKEEQATCPNCR). The TRAF-type zinc-finger motif lies at 152 to 210 (CEISKSLCCRNLAVEKAVSELPSECGFCLRQFPRSLLERHQKEECQDRVTQCKYKRIGC).

This sequence belongs to the ZFTRAF1 family. Interacts with LGALS3. Expressed in heart, brain, liver, testis and kidney.

It localises to the cytoplasm. It is found in the perinuclear region. The sequence is that of Zinc finger TRAF-type-containing protein 1 from Mus musculus (Mouse).